The chain runs to 146 residues: Large ribosomal subunit protein uL15 (146 aa).

Composition is skewed to basic residues over residues 1-13 (MIRK…RMRG) and 22-38 (SKKR…GQAG). The interval 1–38 (MIRKRRKITRMRGSRTVGGGCSKKRRGAGHRGGRGQAG) is disordered.

Belongs to the universal ribosomal protein uL15 family. In terms of assembly, part of the 50S ribosomal subunit.

In terms of biological role, binds to the 23S rRNA. The polypeptide is Large ribosomal subunit protein uL15 (Methanothermobacter thermautotrophicus (strain ATCC 29096 / DSM 1053 / JCM 10044 / NBRC 100330 / Delta H) (Methanobacterium thermoautotrophicum)).